The chain runs to 249 residues: 2,3-bisphosphoglycerate-dependent phosphoglycerate mutase (249 aa).

Substrate is bound by residues 8-15 (RHGQSAWN), 21-22 (TG), R60, 87-90 (ERHY), K98, 114-115 (RR), and 183-184 (GN). H9 acts as the Tele-phosphohistidine intermediate in catalysis. E87 (proton donor/acceptor) is an active-site residue. The tract at residues 115-137 (RSYDTPPPPLPADDPRSPAGDAR) is disordered.

The protein belongs to the phosphoglycerate mutase family. BPG-dependent PGAM subfamily. In terms of assembly, homodimer.

It carries out the reaction (2R)-2-phosphoglycerate = (2R)-3-phosphoglycerate. The protein operates within carbohydrate degradation; glycolysis; pyruvate from D-glyceraldehyde 3-phosphate: step 3/5. In terms of biological role, catalyzes the interconversion of 2-phosphoglycerate and 3-phosphoglycerate. This chain is 2,3-bisphosphoglycerate-dependent phosphoglycerate mutase, found in Nitratidesulfovibrio vulgaris (strain DSM 19637 / Miyazaki F) (Desulfovibrio vulgaris).